The following is a 531-amino-acid chain: Pancreatic secretory granule membrane major glycoprotein GP2 (531 aa).

Positions 1 to 21 (MVGCDLLWLAAASCVLTLVSP) are cleaved as a signal peptide. Asn-33 carries an N-linked (GlcNAc...) asparagine glycan. The tract at residues 34–53 (SSNLDLDCGSPDSPSSGICF) is beta hairpin. Disulfide bonds link Cys-41–Cys-52, Cys-56–Cys-151, Cys-79–Cys-169, Cys-101–Cys-139, Cys-107–Cys-174, Cys-132–Cys-140, Cys-184–Cys-194, Cys-188–Cys-203, Cys-205–Cys-235, Cys-223–Cys-314, and Cys-255–Cys-278. The D10C stretch occupies residues 54–74 (DPCQNHTVLNDPTRSTENNDS). N-linked (GlcNAc...) asparagine glycans are attached at residues Asn-58 and Asn-72. Residues 180 to 224 (APKNCEITCRPEEECVFQNNNWSCVCRQDLHVSDSQSLQPLLDCG) enclose the EGF-like domain. Residue Asn-200 is glycosylated (N-linked (GlcNAc...) asparagine). Positions 222–315 (DCGDNEIKVK…FRVNVNFQCA (94 aa)) are ZP-N. The region spanning 222 to 478 (DCGDNEIKVK…PSCSTNRLRS (257 aa)) is the ZP domain. N-linked (GlcNAc...) asparagine glycosylation is found at Asn-256 and Asn-285. The flexible ZP-N/ZP-C linker stretch occupies residues 316-339 (YPLDMSVSLETALQPIVSSLTVDV). Positions 340 to 351 (DGAGEFNVKMAL) are internal hydrophobic patch (IHP). The interval 340–478 (DGAGEFNVKM…PSCSTNRLRS (139 aa)) is ZP-C. Disulfide bonds link Cys-395–Cys-455, Cys-416–Cys-471, and Cys-460–Cys-467. Residues 485 to 493 (YNRVLDLGP) are external hydrophobic patch (EHP).

In terms of assembly, interacts with SYCN. Interacts with bacterial adhesin fimH. N-glycosylated. Specifically expressed by M (microfold) cells which are atypical epithelial cells of the intestine.

The protein resides in the zymogen granule membrane. It is found in the secreted. The protein localises to the cell membrane. It localises to the apical cell membrane. Its subcellular location is the membrane raft. The protein resides in the endosome. Functionally, functions as an intestinal M-cell transcytotic receptor specific of type-I-piliated bacteria that participates in the mucosal immune response toward these bacteria. At the apical membrane of M-cells it binds fimH, a protein of the bacteria type I pilus tip. Internalizes bound bacteria, like E.coli and S.typhimurium, from the lumen of the intestine and delivers them, through M-cells, to the underlying organized lymphoid follicles where they are captured by antigen-presenting dendritic cells to elicit a mucosal immune response. The sequence is that of Pancreatic secretory granule membrane major glycoprotein GP2 from Mus musculus (Mouse).